The primary structure comprises 351 residues: Photosystem II D2 protein (351 aa).

The chain crosses the membrane as a helical span at residues 39–59 (CAFLALGGWLTGTTFVTSWYT). His116 lines the chlorophyll a pocket. Residues 123–139 (GFMLRQFEIARLVGIRP) form a helical membrane-spanning segment. Pheophytin a is bound by residues Gln128 and Asn141. Residues 151 to 164 (VFVSVFLMYPLGQS) form a helical membrane-spanning segment. Chlorophyll a is bound at residue His196. A helical transmembrane segment spans residues 206–226 (GALLCAIHGATVENTLFEDGE). A plastoquinone contacts are provided by His213 and Phe260. Position 213 (His213) interacts with Fe cation. Residue His267 participates in Fe cation binding. Residues 277 to 293 (GLWMSAVGIVGLALNLR) traverse the membrane as a helical segment.

It belongs to the reaction center PufL/M/PsbA/D family. As to quaternary structure, PSII is composed of 1 copy each of membrane proteins PsbA, PsbB, PsbC, PsbD, PsbE, PsbF, PsbH, PsbI, PsbJ, PsbK, PsbL, PsbM, PsbT, PsbX, PsbY, PsbZ, Psb30/Ycf12, peripheral proteins PsbO, CyanoQ (PsbQ), PsbU, PsbV and a large number of cofactors. It forms dimeric complexes. The D1/D2 heterodimer binds P680, chlorophylls that are the primary electron donor of PSII, and subsequent electron acceptors. It shares a non-heme iron and each subunit binds pheophytin, quinone, additional chlorophylls, carotenoids and lipids. There is also a Cl(-1) ion associated with D1 and D2, which is required for oxygen evolution. The PSII complex binds additional chlorophylls, carotenoids and specific lipids. is required as a cofactor.

The protein localises to the cellular thylakoid membrane. It catalyses the reaction 2 a plastoquinone + 4 hnu + 2 H2O = 2 a plastoquinol + O2. In terms of biological role, photosystem II (PSII) is a light-driven water:plastoquinone oxidoreductase that uses light energy to abstract electrons from H(2)O, generating O(2) and a proton gradient subsequently used for ATP formation. It consists of a core antenna complex that captures photons, and an electron transfer chain that converts photonic excitation into a charge separation. The D1/D2 (PsbA/PsbD) reaction center heterodimer binds P680, the primary electron donor of PSII as well as several subsequent electron acceptors. D2 is needed for assembly of a stable PSII complex. The protein is Photosystem II D2 protein of Nostoc sp. (strain PCC 7120 / SAG 25.82 / UTEX 2576).